The primary structure comprises 366 residues: Spermine synthase (366 aa).

Ala2 carries the post-translational modification N-acetylalanine. Ser57 is subject to Phosphoserine. The region spanning Arg122 to Lys362 is the PABS domain. Residue Gln148 participates in S-adenosyl 3-(methylsulfanyl)propylamine binding. 2 residues coordinate spermidine: Tyr177 and Asp201. S-adenosyl 3-(methylsulfanyl)propylamine contacts are provided by residues Glu220 and Asp255–Cys256. Asp276 serves as the catalytic Proton acceptor. Spermidine-binding residues include Tyr351 and Glu353.

It belongs to the spermidine/spermine synthase family. In terms of assembly, homodimer. Dimerization is mediated through the N-terminal domain and seems to be required for activity as deletion of the N-terminal domain causes complete loss of activity.

It carries out the reaction S-adenosyl 3-(methylsulfanyl)propylamine + spermidine = spermine + S-methyl-5'-thioadenosine + H(+). Its pathway is amine and polyamine biosynthesis; spermine biosynthesis; spermine from spermidine: step 1/1. Functionally, catalyzes the production of spermine from spermidine and decarboxylated S-adenosylmethionine (dcSAM). Required for normal viability, growth and fertility. The polypeptide is Spermine synthase (Sms) (Mus musculus (Mouse)).